The primary structure comprises 422 residues: Cytochrome P450-pinF1, plant-inducible (422 aa).

Heme is bound at residue Cys-369.

It belongs to the cytochrome P450 family. Heme is required as a cofactor.

Not essential for virulence, but may be involved in the detoxification of plant protective agents at the site of wounding. This is Cytochrome P450-pinF1, plant-inducible (cyp103) from Rhizobium radiobacter (Agrobacterium tumefaciens).